The sequence spans 214 residues: Large ribosomal subunit protein uL3 (214 aa).

The tract at residues 131 to 155 (GAQRTSHGNSRSHRVPGSIGMAQDP) is disordered. Q153 carries the N5-methylglutamine modification.

This sequence belongs to the universal ribosomal protein uL3 family. In terms of assembly, part of the 50S ribosomal subunit. Forms a cluster with proteins L14 and L19. In terms of processing, methylated by PrmB.

In terms of biological role, one of the primary rRNA binding proteins, it binds directly near the 3'-end of the 23S rRNA, where it nucleates assembly of the 50S subunit. The sequence is that of Large ribosomal subunit protein uL3 from Neisseria gonorrhoeae (strain ATCC 700825 / FA 1090).